The sequence spans 61 residues: Small ribosomal subunit protein uS14 (61 aa).

The Zn(2+) site is built by Cys24, Cys27, Cys40, and Cys43.

The protein belongs to the universal ribosomal protein uS14 family. Zinc-binding uS14 subfamily. As to quaternary structure, part of the 30S ribosomal subunit. Contacts proteins S3 and S10. The cofactor is Zn(2+).

Binds 16S rRNA, required for the assembly of 30S particles and may also be responsible for determining the conformation of the 16S rRNA at the A site. This Helicobacter pylori (strain J99 / ATCC 700824) (Campylobacter pylori J99) protein is Small ribosomal subunit protein uS14.